We begin with the raw amino-acid sequence, 314 residues long: tRNA dimethylallyltransferase (314 aa).

10–17 is a binding site for ATP; sequence GPTAVGKT. Residue 12-17 participates in substrate binding; that stretch reads TAVGKT. Interaction with substrate tRNA stretches follow at residues 35-38, 160-164, 239-244, and 272-279; these read DSMQ, RRVIR, QAIGYK, and KRQLTWFR.

This sequence belongs to the IPP transferase family. In terms of assembly, monomer. Mg(2+) serves as cofactor.

The catalysed reaction is adenosine(37) in tRNA + dimethylallyl diphosphate = N(6)-dimethylallyladenosine(37) in tRNA + diphosphate. Catalyzes the transfer of a dimethylallyl group onto the adenine at position 37 in tRNAs that read codons beginning with uridine, leading to the formation of N6-(dimethylallyl)adenosine (i(6)A). In Halalkalibacterium halodurans (strain ATCC BAA-125 / DSM 18197 / FERM 7344 / JCM 9153 / C-125) (Bacillus halodurans), this protein is tRNA dimethylallyltransferase (miaA).